A 354-amino-acid chain; its full sequence is Isopentenyl-diphosphate delta-isomerase (354 aa).

Residue 11 to 12 (KK) coordinates substrate. FMN-binding positions include S67, 68–70 (SMT), S98, and N126. A substrate-binding site is contributed by 98–100 (SFK). A substrate-binding site is contributed by Q160. E161 contributes to the Mg(2+) binding site. FMN contacts are provided by residues K192, T222, and 289–290 (AA).

The protein belongs to the IPP isomerase type 2 family. In terms of assembly, homooctamer. Dimer of tetramers. FMN is required as a cofactor. The cofactor is NADPH. Mg(2+) serves as cofactor.

The protein resides in the cytoplasm. It carries out the reaction isopentenyl diphosphate = dimethylallyl diphosphate. Its function is as follows. Involved in the biosynthesis of isoprenoids. Catalyzes the 1,3-allylic rearrangement of the homoallylic substrate isopentenyl (IPP) to its allylic isomer, dimethylallyl diphosphate (DMAPP). The sequence is that of Isopentenyl-diphosphate delta-isomerase from Borreliella afzelii (strain PKo) (Borrelia afzelii).